The sequence spans 353 residues: UPF0283 membrane protein YpsIP31758_1791 (353 aa).

Transmembrane regions (helical) follow at residues 71–91 (MVTAGMVILGASVIAQSVQWV), 101–121 (IALGATTAGGLIILAGVGSVV), and 214–234 (ESALMIAVSPLALVDMAFIAW).

The protein belongs to the UPF0283 family.

The protein resides in the cell inner membrane. In Yersinia pseudotuberculosis serotype O:1b (strain IP 31758), this protein is UPF0283 membrane protein YpsIP31758_1791.